The primary structure comprises 266 residues: Hemin import ATP-binding protein HmuV (266 aa).

The 237-residue stretch at 12–248 (LEANQLSYHV…ETLTRWYQAD (237 aa)) folds into the ABC transporter domain. 44–51 (GPNGAGKS) provides a ligand contact to ATP.

The protein belongs to the ABC transporter superfamily. Heme (hemin) importer (TC 3.A.1.14.5) family. As to quaternary structure, the complex is composed of two ATP-binding proteins (HmuV), two transmembrane proteins (HmuU) and a solute-binding protein (HmuT).

The protein resides in the cell inner membrane. Its function is as follows. Part of the ABC transporter complex HmuTUV involved in hemin import. Responsible for energy coupling to the transport system. This Yersinia enterocolitica protein is Hemin import ATP-binding protein HmuV.